The following is a 347-amino-acid chain: NADH-ubiquinone oxidoreductase chain 2 (347 aa).

11 consecutive transmembrane segments (helical) span residues 1 to 21 (MNPM…FIVT), 25 to 45 (HWFM…PVLM), 59 to 79 (YFLT…INLM), 96 to 116 (MLIT…FWVP), 122 to 142 (VSLP…LSLL), 149 to 169 (VNMN…GWGG), 178 to 198 (IMAY…VYNP), 201 to 221 (SLLN…LLIF), 237 to 257 (APII…LPPL), 274 to 294 (NSVI…FFYM), and 326 to 346 (MLPL…LILL).

Belongs to the complex I subunit 2 family. As to quaternary structure, core subunit of respiratory chain NADH dehydrogenase (Complex I) which is composed of 45 different subunits. Interacts with TMEM242.

Its subcellular location is the mitochondrion inner membrane. The catalysed reaction is a ubiquinone + NADH + 5 H(+)(in) = a ubiquinol + NAD(+) + 4 H(+)(out). Its function is as follows. Core subunit of the mitochondrial membrane respiratory chain NADH dehydrogenase (Complex I) that is believed to belong to the minimal assembly required for catalysis. Complex I functions in the transfer of electrons from NADH to the respiratory chain. The immediate electron acceptor for the enzyme is believed to be ubiquinone. This chain is NADH-ubiquinone oxidoreductase chain 2, found in Crocidura suaveolens gueldenstaedtii (Gueldenstaedt's shrew).